Here is a 220-residue protein sequence, read N- to C-terminus: Superoxide dismutase [Fe] (220 aa).

The Fe cation site is built by His-26, His-73, Asp-164, and His-168.

It belongs to the iron/manganese superoxide dismutase family. As to quaternary structure, homodimer. Fe cation is required as a cofactor.

The enzyme catalyses 2 superoxide + 2 H(+) = H2O2 + O2. Its function is as follows. Destroys superoxide anion radicals which are normally produced within the cells and which are toxic to biological systems. This chain is Superoxide dismutase [Fe] (sodB), found in Campylobacter coli.